The sequence spans 184 residues: TATA-box-binding protein (184 aa).

2 repeat units span residues 9 to 85 (IENI…IDKL) and 100 to 178 (VQNI…KKDL).

Belongs to the TBP family.

General factor that plays a role in the activation of archaeal genes transcribed by RNA polymerase. Binds specifically to the TATA box promoter element which lies close to the position of transcription initiation. The polypeptide is TATA-box-binding protein (Picrophilus torridus (strain ATCC 700027 / DSM 9790 / JCM 10055 / NBRC 100828 / KAW 2/3)).